We begin with the raw amino-acid sequence, 284 residues long: UDP-N-acetylenolpyruvoylglucosamine reductase (284 aa).

The FAD-binding PCMH-type domain maps to 21 to 180; sequence KIGGPARLFV…LKAAFKLKKA (160 aa). The active site involves Arg159. The active-site Proton donor is Ser209. Glu280 is an active-site residue.

The protein belongs to the MurB family. FAD is required as a cofactor.

The protein localises to the cytoplasm. The catalysed reaction is UDP-N-acetyl-alpha-D-muramate + NADP(+) = UDP-N-acetyl-3-O-(1-carboxyvinyl)-alpha-D-glucosamine + NADPH + H(+). Its pathway is cell wall biogenesis; peptidoglycan biosynthesis. Its function is as follows. Cell wall formation. The sequence is that of UDP-N-acetylenolpyruvoylglucosamine reductase from Pseudothermotoga lettingae (strain ATCC BAA-301 / DSM 14385 / NBRC 107922 / TMO) (Thermotoga lettingae).